Here is a 238-residue protein sequence, read N- to C-terminus: 2,3,4,5-tetrahydropyridine-2,6-dicarboxylate N-acetyltransferase (238 aa).

Belongs to the transferase hexapeptide repeat family. DapH subfamily.

It carries out the reaction (S)-2,3,4,5-tetrahydrodipicolinate + acetyl-CoA + H2O = L-2-acetamido-6-oxoheptanedioate + CoA. It functions in the pathway amino-acid biosynthesis; L-lysine biosynthesis via DAP pathway; LL-2,6-diaminopimelate from (S)-tetrahydrodipicolinate (acetylase route): step 1/3. Functionally, catalyzes the transfer of an acetyl group from acetyl-CoA to tetrahydrodipicolinate. The polypeptide is 2,3,4,5-tetrahydropyridine-2,6-dicarboxylate N-acetyltransferase (Pseudothermotoga lettingae (strain ATCC BAA-301 / DSM 14385 / NBRC 107922 / TMO) (Thermotoga lettingae)).